A 1235-amino-acid chain; its full sequence is ATP-dependent helicase/nuclease subunit A (1235 aa).

One can recognise a UvrD-like helicase ATP-binding domain in the interval 12 to 482 (SLWTDDQWKA…IDLSQNFRSR (471 aa)). 33–40 (AAAGSGKT) contacts ATP. The 292-residue stretch at 509–800 (AAELTLGANF…RMMTIHASKG (292 aa)) folds into the UvrD-like helicase C-terminal domain.

This sequence belongs to the helicase family. AddA subfamily. In terms of assembly, heterodimer of AddA and AddB/RexB. The cofactor is Mg(2+).

The enzyme catalyses Couples ATP hydrolysis with the unwinding of duplex DNA by translocating in the 3'-5' direction.. The catalysed reaction is ATP + H2O = ADP + phosphate + H(+). The heterodimer acts as both an ATP-dependent DNA helicase and an ATP-dependent, dual-direction single-stranded exonuclease. Recognizes the chi site generating a DNA molecule suitable for the initiation of homologous recombination. The AddA nuclease domain is required for chi fragment generation; this subunit has the helicase and 3' -&gt; 5' nuclease activities. This Listeria monocytogenes serovar 1/2a (strain ATCC BAA-679 / EGD-e) protein is ATP-dependent helicase/nuclease subunit A.